Here is a 217-residue protein sequence, read N- to C-terminus: MELTSLEARVIGCLLEKELTTPDQYPLSLNSLALACNQKSSREPVLSLSESQVKTVLDDLTKKRLLSEQSGFGSRVVKYKHRFCNTEFSELQLSSAEVAIICVLLLRGPQTPGELKTRTNRLHEFADVSQVETALLALSQREKPLVVQLAREANKRDCRFLECFSGNVDDYDVNSSDAIVVSNHTQQTLQQDSKIVELEQRVKLLEQKLAQLESLLN.

This sequence belongs to the UPF0502 family.

The chain is UPF0502 protein Sfri_1696 from Shewanella frigidimarina (strain NCIMB 400).